The primary structure comprises 1263 residues: DNA-directed RNA polymerase subunit beta (1263 aa).

This sequence belongs to the RNA polymerase beta chain family. The RNAP catalytic core consists of 2 alpha, 1 beta, 1 beta' and 1 omega subunit. When a sigma factor is associated with the core the holoenzyme is formed, which can initiate transcription.

It catalyses the reaction RNA(n) + a ribonucleoside 5'-triphosphate = RNA(n+1) + diphosphate. Its function is as follows. DNA-dependent RNA polymerase catalyzes the transcription of DNA into RNA using the four ribonucleoside triphosphates as substrates. The polypeptide is DNA-directed RNA polymerase subunit beta (Thermotoga maritima (strain ATCC 43589 / DSM 3109 / JCM 10099 / NBRC 100826 / MSB8)).